The chain runs to 203 residues: uncharacterized protein (203 aa).

Transmembrane regions (helical) follow at residues 60–80 (IIDM…FFLY), 114–134 (WFQL…YFCT), and 157–177 (LQLG…ALIL). An ATP-binding site is contributed by 192–199 (GAMSEGKT).

It localises to the membrane. This is an uncharacterized protein from Saccharomyces cerevisiae (strain ATCC 204508 / S288c) (Baker's yeast).